The following is a 430-amino-acid chain: Tol-Pal system protein TolB (430 aa).

Residues 1–21 (MKQAFRVALGFLILWASVLHA) form the signal peptide.

It belongs to the TolB family. As to quaternary structure, the Tol-Pal system is composed of five core proteins: the inner membrane proteins TolA, TolQ and TolR, the periplasmic protein TolB and the outer membrane protein Pal. They form a network linking the inner and outer membranes and the peptidoglycan layer.

It is found in the periplasm. Its function is as follows. Part of the Tol-Pal system, which plays a role in outer membrane invagination during cell division and is important for maintaining outer membrane integrity. TolB occupies a key intermediary position in the Tol-Pal system because it communicates directly with both membrane-embedded components, Pal in the outer membrane and TolA in the inner membrane. This Serratia proteamaculans (strain 568) protein is Tol-Pal system protein TolB.